Here is a 303-residue protein sequence, read N- to C-terminus: MRIGGVEVTKFASEMMSSSSSSAVEMLNLKEASNWWSDVNESPIWQDRIFHVLAVLYGIVSLVAVIQLVRIQLRVPEYGWTTQKVFHFLNFVVNGVRAVVFVFRRNVQFMQPEILQHILLDIPSLAFFTTYALLVLFWAEIYYQARAVSTDGLRPSFFTINAVVYVVQIALWLVLWWKPVRVMVILSKMFFAGVSLFAALGFLLYGGRLFLMLQRFPVESKGRRKKLQEVGYVTTICFTCFLIRCIMMCFAAFDEGANLDVLDHPILNFIYYLLVEILPSSLVLFILRKLPPKRGITQYHQIR.

At 1-48 (MRIGGVEVTKFASEMMSSSSSSAVEMLNLKEASNWWSDVNESPIWQDR) the chain is on the extracellular side. A helical transmembrane segment spans residues 49–69 (IFHVLAVLYGIVSLVAVIQLV). Over 70–82 (RIQLRVPEYGWTT) the chain is Cytoplasmic. A helical transmembrane segment spans residues 83 to 103 (QKVFHFLNFVVNGVRAVVFVF). Over 104–117 (RRNVQFMQPEILQH) the chain is Extracellular. Residues 118 to 138 (ILLDIPSLAFFTTYALLVLFW) form a helical membrane-spanning segment. The Cytoplasmic portion of the chain corresponds to 139–156 (AEIYYQARAVSTDGLRPS). Residues 157–177 (FFTINAVVYVVQIALWLVLWW) traverse the membrane as a helical segment. Over 178–183 (KPVRVM) the chain is Extracellular. Residues 184–204 (VILSKMFFAGVSLFAALGFLL) form a helical membrane-spanning segment. At 205-232 (YGGRLFLMLQRFPVESKGRRKKLQEVGY) the chain is on the cytoplasmic side. A helical membrane pass occupies residues 233-253 (VTTICFTCFLIRCIMMCFAAF). Topologically, residues 254-265 (DEGANLDVLDHP) are extracellular. The chain crosses the membrane as a helical span at residues 266–286 (ILNFIYYLLVEILPSSLVLFI). At 287 to 303 (LRKLPPKRGITQYHQIR) the chain is on the cytoplasmic side.

The protein belongs to the plant tobamovirus multiplication TOM1 protein family. As to quaternary structure, constituent of tobamovirus replication complex. Interacts with the helicase domain of tobamovirus-encoded replication proteins.

The protein localises to the vacuole membrane. In terms of biological role, contributes to the intracellular multiplication of tobamoviruses, probably being a membrane anchor promoting the formation of the replication complex. This is Tobamovirus multiplication protein 3 (TOM3) from Arabidopsis thaliana (Mouse-ear cress).